A 138-amino-acid polypeptide reads, in one-letter code: Cysteine desulfuration protein SufE (138 aa).

The Cysteine persulfide intermediate role is filled by C51.

The protein belongs to the SufE family. Homodimer. Interacts with SufS.

It is found in the cytoplasm. Its pathway is cofactor biosynthesis; iron-sulfur cluster biosynthesis. Its function is as follows. Participates in cysteine desulfuration mediated by SufS. Cysteine desulfuration mobilizes sulfur from L-cysteine to yield L-alanine and constitutes an essential step in sulfur metabolism for biosynthesis of a variety of sulfur-containing biomolecules. Functions as a sulfur acceptor for SufS, by mediating the direct transfer of the sulfur atom from the S-sulfanylcysteine of SufS, an intermediate product of cysteine desulfuration process. In Shigella boydii serotype 18 (strain CDC 3083-94 / BS512), this protein is Cysteine desulfuration protein SufE.